Here is a 275-residue protein sequence, read N- to C-terminus: Glucosamine-6-phosphate deaminase 2 (275 aa).

Aspartate 72 acts as the Proton acceptor; for enolization step in catalysis. Residues asparagine 103–isoleucine 131 adopt a coiled-coil conformation. Aspartate 141 functions as the For ring-opening step in the catalytic mechanism. Histidine 143 (proton acceptor; for ring-opening step) is an active-site residue. Glutamate 148 serves as the catalytic For ring-opening step.

This sequence belongs to the glucosamine/galactosamine-6-phosphate isomerase family. As to quaternary structure, homohexamer.

Its subcellular location is the cytoplasm. It carries out the reaction alpha-D-glucosamine 6-phosphate + H2O = beta-D-fructose 6-phosphate + NH4(+). Catalyzes the reversible conversion of alpha-D-glucosamine 6-phosphate (GlcN-6P) into beta-D-fructose 6-phosphate (Fru-6P) and ammonium ion, a regulatory reaction step in de novo uridine diphosphate-N-acetyl-alpha-D-glucosamine (UDP-GlcNAc) biosynthesis via hexosamine pathway. The polypeptide is Glucosamine-6-phosphate deaminase 2 (Xenopus tropicalis (Western clawed frog)).